The primary structure comprises 291 residues: MAGMKEIRGKIKSVQNTRKITKAMEMVAASKMRRAQERMRAARPYADKVRAIAAHMSRANPEYRHPFMVANDGATTAGIILVTTDKGLCGGLNTNVLRATVQKFKELEEKGQKVEATAIGSKGLGFLNRFGAKVMSQVVHLGDTPHLDKLIGAVKTQLDLYSEGKLSAVYIAYTRFVNTMKQEAVIEQLLPLSSEHFEADDGTPATSWDYIYEPDAQAVVDELLVRYVEALVYQAVAENMASEQSARMVAMKAASDNAKTVISELQLVYNKSRQAAITKELSEIVGGAAAV.

This sequence belongs to the ATPase gamma chain family. F-type ATPases have 2 components, CF(1) - the catalytic core - and CF(0) - the membrane proton channel. CF(1) has five subunits: alpha(3), beta(3), gamma(1), delta(1), epsilon(1). CF(0) has three main subunits: a, b and c.

The protein resides in the cell inner membrane. Produces ATP from ADP in the presence of a proton gradient across the membrane. The gamma chain is believed to be important in regulating ATPase activity and the flow of protons through the CF(0) complex. The protein is ATP synthase gamma chain of Burkholderia ambifaria (strain MC40-6).